A 310-amino-acid polypeptide reads, in one-letter code: N-acetyl-gamma-glutamyl-phosphate reductase (310 aa).

The active site involves Cys117.

This sequence belongs to the NAGSA dehydrogenase family. Type 2 subfamily.

The protein resides in the cytoplasm. It carries out the reaction N-acetyl-L-glutamate 5-semialdehyde + phosphate + NADP(+) = N-acetyl-L-glutamyl 5-phosphate + NADPH + H(+). It participates in amino-acid biosynthesis; L-arginine biosynthesis; N(2)-acetyl-L-ornithine from L-glutamate: step 3/4. In terms of biological role, catalyzes the NADPH-dependent reduction of N-acetyl-5-glutamyl phosphate to yield N-acetyl-L-glutamate 5-semialdehyde. This is N-acetyl-gamma-glutamyl-phosphate reductase from Brucella suis (strain ATCC 23445 / NCTC 10510).